A 198-amino-acid polypeptide reads, in one-letter code: Alpha-S1-casein (198 aa).

The first 15 residues, 1-15, serve as a signal peptide directing secretion; sequence MKLLILTCLVASAVA. Disordered regions lie at residues 28–47 and 71–97; these read QTQR…LKEE and SEST…EQKH. Phosphoserine is present on residues serine 39, serine 80, serine 81, serine 83, serine 84, and serine 85.

Belongs to the alpha-casein family. In terms of tissue distribution, mammary gland specific. Secreted in milk.

It is found in the secreted. Its function is as follows. Important role in the capacity of milk to transport calcium phosphate. This is Alpha-S1-casein (CSN1S1) from Cavia porcellus (Guinea pig).